The chain runs to 468 residues: UDP-N-acetylmuramate--L-alanine ligase (468 aa).

Residue 114-120 (GTHGKTT) participates in ATP binding.

Belongs to the MurCDEF family.

The protein localises to the cytoplasm. It carries out the reaction UDP-N-acetyl-alpha-D-muramate + L-alanine + ATP = UDP-N-acetyl-alpha-D-muramoyl-L-alanine + ADP + phosphate + H(+). It participates in cell wall biogenesis; peptidoglycan biosynthesis. Functionally, cell wall formation. In Methylocella silvestris (strain DSM 15510 / CIP 108128 / LMG 27833 / NCIMB 13906 / BL2), this protein is UDP-N-acetylmuramate--L-alanine ligase.